The chain runs to 538 residues: AAA ATPase forming ring-shaped complexes (538 aa).

A coiled-coil region spans residues 14–54; that stretch reads ARELRLANHRLGAQNEKLTEALKASREKLAEINSRLADMAE. 240–245 is an ATP binding site; sequence GNGKTL.

It belongs to the AAA ATPase family. In terms of assembly, homohexamer. Assembles into a hexameric ring structure.

The chain is AAA ATPase forming ring-shaped complexes from Corynebacterium urealyticum (strain ATCC 43042 / DSM 7109).